Reading from the N-terminus, the 539-residue chain is Fucosyltransferase 2 (539 aa).

Over 1–5 (MRITE) the chain is Cytoplasmic. The chain crosses the membrane as a helical; Signal-anchor for type II membrane protein span at residues 6–26 (ILALFMVLVPVSLVIVAMFGY). The Lumenal segment spans residues 27 to 539 (DQGNGFVQAS…SWGLKLVDNF (513 aa)). N-linked (GlcNAc...) asparagine glycans are attached at residues Asn-44, Asn-231, and Asn-482.

It belongs to the glycosyltransferase 37 family. Expressed in roots, stems, leaves, flowers, siliques and seedlings.

It is found in the golgi apparatus. Its subcellular location is the golgi stack membrane. Its pathway is protein modification; protein glycosylation. In terms of biological role, may be involved in cell wall biosynthesis. May act as a fucosyltransferase. This chain is Fucosyltransferase 2 (FUT2), found in Arabidopsis thaliana (Mouse-ear cress).